The primary structure comprises 1377 residues: Eukaryotic translation initiation factor 4 gamma (1377 aa).

2 stretches are compositionally biased toward low complexity: residues 1 to 57 (MNFR…QQFY) and 84 to 94 (QSPIPQQQPQQ). 4 disordered regions span residues 1-189 (MNFR…EKRT), 259-563 (VIIT…WEKK), 683-702 (NQVQGQQQQQQGNPNFNKYA), and 1041-1063 (EATQNKQEDNRKSNPTGVKNTSN). A compositionally biased stretch (pro residues) spans 95-110 (PQQPQPSQPSPIPQQP). 3 stretches are compositionally biased toward low complexity: residues 111 to 137 (LSPQSSSPSSPQHVVIQPNQPNQQQQN), 168 to 179 (EEQQQQHQHQNN), and 267 to 296 (SSTNSTVLPTSNTSSSSSSPTNANGSSTPS). Residues 297 to 323 (GSGYVTSFSSGNVNLRKNKQSGETTPI) show a composition bias toward polar residues. Over residues 326–412 (DAASTTTSTP…AETSTTTPAT (87 aa)) the composition is skewed to low complexity. 3 stretches are compositionally biased toward basic and acidic residues: residues 420-432 (TTKEEQPKEEVKP), 441-471 (PTKEEPIKEEPTNEEPTKEEPAKVEPIKEEP), and 480-496 (DTKEEPIIVAEEKKQEE). Polar residues predominate over residues 517–526 (VTDSTAASTT). A compositionally biased stretch (low complexity) spans 533–549 (DSTTTATVSTTAAATTT). The span at 1041 to 1052 (EATQNKQEDNRK) shows a compositional bias: basic and acidic residues. Positions 1053–1063 (SNPTGVKNTSN) are enriched in polar residues. One can recognise an MI domain in the interval 1182-1305 (AVSTSITDSI…LITITQFANA (124 aa)).

This sequence belongs to the eukaryotic initiation factor 4G family.

Its function is as follows. Probable component of the protein complex eIF4F, which is involved in the recognition of the mRNA cap, ATP-dependent unwinding of 5'-terminal secondary structure and recruitment of mRNA to the ribosome. This is Eukaryotic translation initiation factor 4 gamma (eif4g) from Dictyostelium discoideum (Social amoeba).